A 471-amino-acid chain; its full sequence is Collagen alpha-3(IV) chain (471 aa).

The triple-helical region stretch occupies residues 1-238; it reads GLPGRKGPVG…KGKPGDTGPP (238 aa). Positions 1-241 are disordered; that stretch reads GLPGRKGPVG…PGDTGPPAAG (241 aa). Pro residues predominate over residues 52 to 61; sequence MPGPPGPPGS. Positions 106-108 match the Cell attachment site motif; sequence RGD. Over residues 127 to 141 the composition is skewed to pro residues; sequence PGPPGPPGQSGPKGP. Residues 165–174 are compositionally biased toward low complexity; that stretch reads SAGEPGMQGE. Pro residues predominate over residues 175–187; sequence PGPPGPPGDPGPC. Pro232 and Pro238 each carry hydroxyproline. The region spanning 246–470 is the Collagen IV NC1 domain; sequence GFVFTRHSQT…SRCQVCMKMR (225 aa). Disulfide bonds link Cys261/Cys352, Cys294/Cys349, Cys306/Cys312, Cys371/Cys466, Cys405/Cys463, and Cys417/Cys423. Residue Met334 forms an S-Lysyl-methionine sulfilimine (Met-Lys) (interchain with K-452) linkage. Residue Lys452 forms an S-Lysyl-methionine sulfilimine (Lys-Met) (interchain with M-334) linkage.

This sequence belongs to the type IV collagen family. As to quaternary structure, there are six type IV collagen isoforms, alpha 1(IV)-alpha 6(IV), each of which can form a triple helix structure with 2 other chains to generate type IV collagen network. The alpha 3(IV) chain forms a triple helical protomer with alpha 4(IV) and alpha 5(IV); this triple helical structure dimerizes through NC1-NC1 domain interactions such that the alpha 3(IV), alpha 4(IV) and alpha 5(IV) chains of one protomer connect with the alpha 5(IV), alpha 4(IV) and alpha 3(IV) chains of the opposite promoter, respectively. Interacts with ITGB3. Associates with LAMB2 at the neuromuscular junction and in GBM. Prolines at the third position of the tripeptide repeating unit (G-X-Y) are hydroxylated in some or all of the chains. Post-translationally, type IV collagens contain numerous cysteine residues which are involved in inter- and intramolecular disulfide bonding. 12 of these, located in the NC1 domain, are conserved in all known type IV collagens. In terms of processing, the trimeric structure of the NC1 domains is stabilized by covalent bonds between Lys and Met residues. Phosphorylated. Thought to be phosphorylated by CERT, but CERT does not have kinase activity.

Its subcellular location is the secreted. The protein resides in the extracellular space. It is found in the extracellular matrix. The protein localises to the basement membrane. Type IV collagen is the major structural component of glomerular basement membranes (GBM), forming a 'chicken-wire' meshwork together with laminins, proteoglycans and entactin/nidogen. The sequence is that of Collagen alpha-3(IV) chain (COL4A3) from Bos taurus (Bovine).